We begin with the raw amino-acid sequence, 417 residues long: uncharacterized protein (417 aa).

The N-terminal stretch at 1–21 (MPYYWGAILIGGVFLAGCTQN) is a signal peptide.

This is an uncharacterized protein from Methanocaldococcus jannaschii (strain ATCC 43067 / DSM 2661 / JAL-1 / JCM 10045 / NBRC 100440) (Methanococcus jannaschii).